Here is a 273-residue protein sequence, read N- to C-terminus: MEADFQVCRNCKRNVASLHFMLHEAHCLRFIVLCPECEEPIPESKMKEHMEVVHQQTKESQQHPAKCKFCELAVQLSNLDVHESHCGSRTEHCPHCNQPITLQVLSQHKAMCLSAKGRPEEGKRIVSSPGRKTRCDLCKQMIPENTYASHMKQCSAPNTVTRIRDESIIVIPSTLAFMDSGNRRSTVSKDVRPKTKNRNSSTKRETKKQNGTVALPLKSGLQQRADLPTGDETAYDTLQNCCQCRILLPLPILNEHQEKCQRLAHQKKLQWGW.

The TRAF-type zinc finger occupies 22–80 (LHEAHCLRFIVLCPECEEPIPESKMKEHMEVVHQQTKESQQHPAKCKFCELAVQLSNLD). A disordered region spans residues 181 to 228 (GNRRSTVSKDVRPKTKNRNSSTKRETKKQNGTVALPLKSGLQQRADLP).

Interacts with BIRC1, BIRC2, BIRC3, BIRC4, BIRC7 and BIRC8. Part of an complex consisting of BIRC4, XAF1 and BIRC5; the complex formation requires IFN-beta stimulation. Interacts with RNF114, the interaction increases XAF1 stability and proapoptotic effects, and may regulate IFN signaling.

Its subcellular location is the cytoplasm. The protein resides in the nucleus. The protein localises to the mitochondrion. Functionally, seems to function as a negative regulator of members of the IAP (inhibitor of apoptosis protein) family. Inhibits anti-caspase activity of BIRC4. Induces cleavage and inactivation of BIRC4 independent of caspase activation. Mediates TNF-alpha-induced apoptosis and is involved in apoptosis in trophoblast cells. May inhibit BIRC4 indirectly by activating the mitochondrial apoptosis pathway. After translocation to mitochondria, promotes translocation of BAX to mitochondria and cytochrome c release from mitochondria. Seems to promote the redistribution of BIRC4 from the cytoplasm to the nucleus, probably independent of BIRC4 inactivation which seems to occur in the cytoplasm. The BIRC4-XAF1 complex mediates down-regulation of BIRC5/survivin; the process requires the E3 ligase activity of BIRC4. Seems to be involved in cellular sensitivity to the proapoptotic actions of TRAIL. May be a tumor suppressor by mediating apoptosis resistance of cancer cells. The protein is XIAP-associated factor 1 (Xaf1) of Mus musculus (Mouse).